We begin with the raw amino-acid sequence, 160 residues long: Large ribosomal subunit protein uL22c (160 aa).

It belongs to the universal ribosomal protein uL22 family. Part of the 50S ribosomal subunit.

It is found in the plastid. Its subcellular location is the chloroplast. Its function is as follows. This protein binds specifically to 23S rRNA. The globular domain of the protein is located near the polypeptide exit tunnel on the outside of the subunit, while an extended beta-hairpin is found that lines the wall of the exit tunnel in the center of the 70S ribosome. The polypeptide is Large ribosomal subunit protein uL22c (rpl22) (Arabis hirsuta (Hairy rock-cress)).